We begin with the raw amino-acid sequence, 167 residues long: GTP-dependent dephospho-CoA kinase (167 aa).

Residues Asp-39, Val-41, Asp-58, Lys-60, and Glu-117 each coordinate GTP.

It belongs to the GTP-dependent DPCK family.

It carries out the reaction 3'-dephospho-CoA + GTP = GDP + CoA + H(+). The protein operates within cofactor biosynthesis; coenzyme A biosynthesis. Its function is as follows. Catalyzes the GTP-dependent phosphorylation of the 3'-hydroxyl group of dephosphocoenzyme A to form coenzyme A (CoA). The sequence is that of GTP-dependent dephospho-CoA kinase from Korarchaeum cryptofilum (strain OPF8).